Reading from the N-terminus, the 769-residue chain is Zinc finger protein 585B (769 aa).

The span at 1-12 (MPASWTSPQKSS) shows a compositional bias: polar residues. The disordered stretch occupies residues 1 to 23 (MPASWTSPQKSSALAPDDHGSSY). One can recognise a KRAB domain in the interval 27-97 (VSFRDVVINF…QGERPRHSCP (71 aa)). 21 consecutive C2H2-type zinc fingers follow at residues 158–180 (YVCI…QKAH), 186–208 (YKCN…QRIH), 214–236 (YQCS…EKIH), 242–264 (HECT…QKIH), 270–292 (YICI…RRIH), 298–320 (YECN…QRIH), 354–376 (SICT…QRIH), 382–404 (YACS…QRIH), 410–432 (YVCM…QIIH), 438–460 (YKCG…KRIH), 466–488 (YVCN…QKTH), 494–516 (YICS…QRIH), 522–544 (YECN…QKIH), 550–572 (YECH…QKIH), 578–600 (YVCT…QRIH), 606–628 (YECS…QPLH), 634–656 (YVCA…QKTH), 662–684 (YICS…HRIH), 690–712 (YECS…QRIH), 718–740 (YVCA…QTTH), and 746–768 (YKCG…QGSH).

This sequence belongs to the krueppel C2H2-type zinc-finger protein family.

It localises to the nucleus. May be involved in transcriptional regulation. This Pongo abelii (Sumatran orangutan) protein is Zinc finger protein 585B (ZNF585B).